A 425-amino-acid chain; its full sequence is Kynureninase (425 aa).

Residues Leu-105, Thr-106, 133-136 (FPSD), Asp-218, His-221, and Tyr-243 each bind pyridoxal 5'-phosphate. An N6-(pyridoxal phosphate)lysine modification is found at Lys-244. The pyridoxal 5'-phosphate site is built by Trp-274 and Asn-302.

This sequence belongs to the kynureninase family. As to quaternary structure, homodimer. Pyridoxal 5'-phosphate is required as a cofactor.

The catalysed reaction is L-kynurenine + H2O = anthranilate + L-alanine + H(+). It catalyses the reaction 3-hydroxy-L-kynurenine + H2O = 3-hydroxyanthranilate + L-alanine + H(+). It participates in amino-acid degradation; L-kynurenine degradation; L-alanine and anthranilate from L-kynurenine: step 1/1. Its pathway is cofactor biosynthesis; NAD(+) biosynthesis; quinolinate from L-kynurenine: step 2/3. In terms of biological role, catalyzes the cleavage of L-kynurenine (L-Kyn) and L-3-hydroxykynurenine (L-3OHKyn) into anthranilic acid (AA) and 3-hydroxyanthranilic acid (3-OHAA), respectively. The chain is Kynureninase from Christiangramia forsetii (strain DSM 17595 / CGMCC 1.15422 / KT0803) (Gramella forsetii).